The chain runs to 564 residues: Cysteine--tRNA ligase CPS1, chloroplastic/mitochondrial (564 aa).

Residues 1 to 43 (MAAAVVVRRAAGLIPLLSSRFGARMPLHRALSQIPPPRFCRLL) constitute a chloroplast and mitochondrion transit peptide. Cysteine 93 contacts Zn(2+). The 'HIGH' region motif lies at 95–105 (VTPYDDSHIGH). Positions 273, 298, and 302 each coordinate Zn(2+). The short motif at 330–334 (KMSKS) is the 'KMSKS' region element. ATP is bound at residue lysine 333.

Belongs to the class-I aminoacyl-tRNA synthetase family. It depends on Zn(2+) as a cofactor.

It localises to the plastid. It is found in the chloroplast. The protein localises to the mitochondrion. The catalysed reaction is tRNA(Cys) + L-cysteine + ATP = L-cysteinyl-tRNA(Cys) + AMP + diphosphate. Nuclear genome-encoded factor required for normal assembly of chloroplast polysomes. This is Cysteine--tRNA ligase CPS1, chloroplastic/mitochondrial from Zea mays (Maize).